Consider the following 1944-residue polypeptide: Anaphase-promoting complex subunit 1 (1944 aa).

A phosphoserine mark is found at S51, S60, S202, and S286. Residue T291 is modified to Phosphothreonine. The segment at 305–343 (LRSLSKGDSPVTSPFQNYSSIHSQSRSTSSPSLHSRSPS) is disordered. Residues S313, S341, S343, S355, S362, S373, and S377 each carry the phosphoserine modification. The segment covering 323–343 (SSIHSQSRSTSSPSLHSRSPS) has biased composition (low complexity). Residues 373 to 396 (SHNQSPKRHSISHSPNSNSNGSFL) form a disordered region. The segment covering 384–394 (SHSPNSNSNGS) has biased composition (low complexity). The residue at position 537 (T537) is a Phosphothreonine. 2 positions are modified to phosphoserine: S547 and S555. Position 571 is a phosphotyrosine (Y571). Phosphoserine occurs at positions 686, 688, and 916. A disordered region spans residues 994 to 1016 (KGKSVLSSDVPSGTETEEEDDGM). Residues 998–1007 (VLSSDVPSGT) show a composition bias toward polar residues. PC repeat units follow at residues 1297–1325 (AAGLALGMVCLGHGSNLIGMSDLNVPEQL), 1366–1404 (GATLALAMIYLKTNNRSIADWLRAPDTMYLLDFVKPEFL), 1467–1501 (GACLSLGFRFAGSENLSAFNCLHKFAKDFMTYLSA), and 1520–1552 (LLSLAMVMAGSGNLKVLQLCRFLHMKTGGEMNY).

Belongs to the APC1 family. The mammalian APC/C is composed at least of 14 distinct subunits ANAPC1, ANAPC2, CDC27/APC3, ANAPC4, ANAPC5, CDC16/APC6, ANAPC7, CDC23/APC8, ANAPC10, ANAPC11, CDC26/APC12, ANAPC13, ANAPC15 and ANAPC16 that assemble into a complex of at least 19 chains with a combined molecular mass of around 1.2 MDa; APC/C interacts with FZR1 and FBXO5. Post-translationally, phosphorylated. Phosphorylation on Ser-355 occurs specifically during mitosis.

It participates in protein modification; protein ubiquitination. Functionally, component of the anaphase promoting complex/cyclosome (APC/C), a cell cycle-regulated E3 ubiquitin ligase that controls progression through mitosis and the G1 phase of the cell cycle. The APC/C complex acts by mediating ubiquitination and subsequent degradation of target proteins: it mainly mediates the formation of 'Lys-11'-linked polyubiquitin chains and, to a lower extent, the formation of 'Lys-48'- and 'Lys-63'-linked polyubiquitin chains. The APC/C complex catalyzes assembly of branched 'Lys-11'-/'Lys-48'-linked branched ubiquitin chains on target proteins. The polypeptide is Anaphase-promoting complex subunit 1 (ANAPC1) (Homo sapiens (Human)).